The chain runs to 866 residues: Probable outer membrane usher protein ElfC (866 aa).

A signal peptide spans 1–35 (MYRTHRQHSLLSSGGVPSFIGGLVVFVSAAFNAQA).

This sequence belongs to the fimbrial export usher family.

Its subcellular location is the cell outer membrane. Functionally, part of the elfADCG-ycbUVF fimbrial operon, which promotes adhesion of bacteria to different abiotic surfaces. Could be involved in the export and assembly of the ElfA fimbrial subunits across the outer membrane. The protein is Probable outer membrane usher protein ElfC (elfC) of Escherichia coli (strain K12).